The primary structure comprises 185 residues: Lactoylglutathione lyase (185 aa).

The disordered stretch occupies residues 1–22 (MASEARESPANNPGLSTNRDEA). Positions 27 to 174 (IMQQTMFRIK…DGYWIEIFDL (148 aa)) constitute a VOC domain. Positions 30 and 34 each coordinate substrate. Glutamine 30 is a Zn(2+) binding site. Glutamate 96 serves as a coordination point for Zn(2+). Substrate is bound by residues asparagine 100, arginine 120, histidine 124, and 154–155 (KM). Histidine 124 lines the Zn(2+) pocket. Residue glutamate 170 coordinates Zn(2+). Glutamate 170 functions as the Proton donor/acceptor in the catalytic mechanism.

The protein belongs to the glyoxalase I family. Zn(2+) is required as a cofactor.

It carries out the reaction (R)-S-lactoylglutathione = methylglyoxal + glutathione. The protein operates within secondary metabolite metabolism; methylglyoxal degradation; (R)-lactate from methylglyoxal: step 1/2. Catalyzes the conversion of hemimercaptal, formed from methylglyoxal and glutathione, to S-lactoylglutathione. The sequence is that of Lactoylglutathione lyase from Arabidopsis thaliana (Mouse-ear cress).